The chain runs to 196 residues: MSHALDAAALDQLFRTARTQNGFLDKPVPASLLQELYDLVKWGPTAANTTPARFVFVTSKEAKAKLAPALSEGNHDKTMAAPVTVIIGFDLDFHEKLPYLFPHTDAKAWFDGPQEGRHEAAIRNGSLQGAYLILAARALGLDAGPMSGFDAAKVDEAFFAGTSIKSNFLVNLGYGDSAGLFPRLPRLSFDEAARIA.

It belongs to the nitroreductase family. HadB/RutE subfamily. FMN is required as a cofactor.

In Stenotrophomonas maltophilia (strain R551-3), this protein is Putative NADH dehydrogenase/NAD(P)H nitroreductase Smal_0358.